The chain runs to 286 residues: MNDAVTLRSGCKVNLDLHITSRRDDGYHEIDSLFLPLEEPHDELVVTVGDAPGITVTCAIQGIDPTRNTVTRAYDAYAEASGFRPPLRVELRKGVPHGAGLGGGSANAAAILNHLESIAPHPLGRETLCRLAARIGADVPFFIHAVPCRASGIGEIITPVAWPYKGFTLLLACPQVQVSTAWAYGALDAAEEKQLRVRGCLTTGGVADRNSFSRESWLHNSFEPVVFASHPELRSLKEALLRHGAAAALMSGSGASVFALFRRREDAEAAFEQLKGHGIRVYQHLL.

The active site involves Lys-12. Residue 96 to 106 (PHGAGLGGGSA) participates in ATP binding. Residue Asp-138 is part of the active site.

The protein belongs to the GHMP kinase family. IspE subfamily.

It catalyses the reaction 4-CDP-2-C-methyl-D-erythritol + ATP = 4-CDP-2-C-methyl-D-erythritol 2-phosphate + ADP + H(+). It participates in isoprenoid biosynthesis; isopentenyl diphosphate biosynthesis via DXP pathway; isopentenyl diphosphate from 1-deoxy-D-xylulose 5-phosphate: step 3/6. Catalyzes the phosphorylation of the position 2 hydroxy group of 4-diphosphocytidyl-2C-methyl-D-erythritol. The protein is 4-diphosphocytidyl-2-C-methyl-D-erythritol kinase of Nitratidesulfovibrio vulgaris (strain ATCC 29579 / DSM 644 / CCUG 34227 / NCIMB 8303 / VKM B-1760 / Hildenborough) (Desulfovibrio vulgaris).